The sequence spans 252 residues: 5-oxoprolinase subunit A (252 aa).

Belongs to the LamB/PxpA family. As to quaternary structure, forms a complex composed of PxpA, PxpB and PxpC.

It catalyses the reaction 5-oxo-L-proline + ATP + 2 H2O = L-glutamate + ADP + phosphate + H(+). Catalyzes the cleavage of 5-oxoproline to form L-glutamate coupled to the hydrolysis of ATP to ADP and inorganic phosphate. This Chloroflexus aggregans (strain MD-66 / DSM 9485) protein is 5-oxoprolinase subunit A.